A 149-amino-acid polypeptide reads, in one-letter code: Transcriptional repressor NrdR (149 aa).

A zinc finger spans residues 3 to 34 (CPFCSTEETKVIDSRLVSEGYQVRRRRECGNC). The ATP-cone domain maps to 49-139 (PKVIKNDGTR…VYLSFDDINQ (91 aa)).

It belongs to the NrdR family. Zn(2+) serves as cofactor.

In terms of biological role, negatively regulates transcription of bacterial ribonucleotide reductase nrd genes and operons by binding to NrdR-boxes. The polypeptide is Transcriptional repressor NrdR (Pasteurella multocida (strain Pm70)).